The chain runs to 415 residues: Beta-1,4-glucuronyltransferase 1 (415 aa).

Topologically, residues Met-1 to Arg-8 are cytoplasmic. A helical; Signal-anchor for type II membrane protein transmembrane segment spans residues Cys-9–Leu-36. Over His-37 to Cys-415 the chain is Lumenal. A glycan (N-linked (GlcNAc...) asparagine) is linked at Asn-204. 2 residues coordinate Mn(2+): Asp-227 and Asp-229. N-linked (GlcNAc...) asparagine glycosylation is present at Asn-300.

It belongs to the glycosyltransferase 49 family. In terms of assembly, interacts with LARGE1 and LARGE2. The cofactor is Mn(2+). In terms of tissue distribution, in the adult, highly expressed in heart, brain, skeletal muscle and kidney and to a lesser extent in placenta, pancreas, spleen, prostate, testis, ovary, small intestine and colon. Very weak expression in lung, liver, thymus and peripheral blood leukocytes. In fetal highly expressed in brain and kidney and to a lesser extent in lung and liver.

The protein resides in the golgi apparatus membrane. It carries out the reaction 3-O-[beta-D-Xyl-(1-&gt;4)-Rib-ol-P-Rib-ol-P-3-beta-D-GalNAc-(1-&gt;3)-beta-D-GlcNAc-(1-&gt;4)-(O-6-P-alpha-D-Man)]-Thr-[protein] + UDP-alpha-D-glucuronate = 3-O-[beta-D-GlcA-(1-&gt;3)-beta-D-Xyl-(1-&gt;4)-Rib-ol-P-Rib-ol-P-3-beta-D-GalNAc-(1-&gt;3)-beta-D-GlcNAc-(1-&gt;4)-(O-6-P-alpha-D-Man)]-Thr-[protein] + UDP + H(+). It participates in protein modification; protein glycosylation. In terms of biological role, beta-1,4-glucuronyltransferase involved in O-mannosylation of alpha-dystroglycan (DAG1). Transfers a glucuronic acid (GlcA) residue onto a xylose (Xyl) acceptor to produce the glucuronyl-beta-1,4-xylose-beta disaccharide primer, which is further elongated by LARGE1, during synthesis of phosphorylated O-mannosyl glycan. Phosphorylated O-mannosyl glycan is a carbohydrate structure present in alpha-dystroglycan (DAG1), which is required for binding laminin G-like domain-containing extracellular proteins with high affinity. Required for axon guidance; via its function in O-mannosylation of alpha-dystroglycan (DAG1). The sequence is that of Beta-1,4-glucuronyltransferase 1 from Homo sapiens (Human).